The sequence spans 804 residues: Leucine--tRNA ligase (804 aa).

The 'HIGH' region motif lies at 40–51 (PYPSGAGLHVGH). The short motif at 576 to 580 (KMSKS) is the 'KMSKS' region element. K579 lines the ATP pocket.

The protein belongs to the class-I aminoacyl-tRNA synthetase family.

It is found in the cytoplasm. The enzyme catalyses tRNA(Leu) + L-leucine + ATP = L-leucyl-tRNA(Leu) + AMP + diphosphate. This chain is Leucine--tRNA ligase, found in Bacillus pumilus (strain SAFR-032).